The sequence spans 628 residues: ATP-dependent RNA helicase mrh4, mitochondrial (628 aa).

The transit peptide at 1-40 directs the protein to the mitochondrion; that stretch reads MSLAVRPPVCLLCRSGAPTLLPSSVSQVARSMATARLRRK. A disordered region spans residues 51-109; that stretch reads AKSSINQKRSGKAKFGPWSGMNQTEAHIRGEPRSRSQAALRRSGEKAADTPRKSDSPLY. Basic and acidic residues predominate over residues 92–105; it reads RSGEKAADTPRKSD. The Q motif signature appears at 137–170; that stretch reads TSFDHFPLLPVVRHSIFSQALPGLVDVTPTPIQR. A Helicase ATP-binding domain is found at 190–402; the sequence is EDGDPQYDQY…RKRYPDIKRL (213 aa). 203 to 210 serves as a coordination point for ATP; the sequence is AETGSGKT. The span at 228-253 shows a compositional bias: basic and acidic residues; it reads DKENERKEEERKAKEKEERLKNRAFD. The disordered stretch occupies residues 228-260; sequence DKENERKEEERKAKEKEERLKNRAFDLEPEEPP. The DEAD box signature appears at 349-352; sequence DEAD. The 173-residue stretch at 456 to 628 folds into the Helicase C-terminal domain; the sequence is YVGPNIKKIL…EGMFRGQALI (173 aa).

This sequence belongs to the DEAD box helicase family. MRH4 subfamily.

It is found in the mitochondrion. The enzyme catalyses ATP + H2O = ADP + phosphate + H(+). ATP-binding RNA helicase involved in mitochondrial RNA metabolism. Required for maintenance of mitochondrial DNA. This Aspergillus oryzae (strain ATCC 42149 / RIB 40) (Yellow koji mold) protein is ATP-dependent RNA helicase mrh4, mitochondrial (mrh4).